The sequence spans 123 residues: Ribosome-binding factor A (123 aa).

It belongs to the RbfA family. Monomer. Binds 30S ribosomal subunits, but not 50S ribosomal subunits or 70S ribosomes.

The protein resides in the cytoplasm. One of several proteins that assist in the late maturation steps of the functional core of the 30S ribosomal subunit. Associates with free 30S ribosomal subunits (but not with 30S subunits that are part of 70S ribosomes or polysomes). Required for efficient processing of 16S rRNA. May interact with the 5'-terminal helix region of 16S rRNA. The protein is Ribosome-binding factor A of Rickettsia bellii (strain OSU 85-389).